Reading from the N-terminus, the 177-residue chain is Isopentenyl-diphosphate Delta-isomerase (177 aa).

Residues His22 and His28 each contribute to the Mn(2+) site. The 135-residue stretch at Leu26–Ile160 folds into the Nudix hydrolase domain. Cys62 is a catalytic residue. His64 is a Mn(2+) binding site. Glu82 is a binding site for Mg(2+). Residues Glu108 and Glu110 each contribute to the Mn(2+) site. Residue Glu110 is part of the active site.

The protein belongs to the IPP isomerase type 1 family. Mg(2+) is required as a cofactor. It depends on Mn(2+) as a cofactor.

The protein resides in the cytoplasm. The enzyme catalyses isopentenyl diphosphate = dimethylallyl diphosphate. It participates in isoprenoid biosynthesis; dimethylallyl diphosphate biosynthesis; dimethylallyl diphosphate from isopentenyl diphosphate: step 1/1. Its pathway is porphyrin-containing compound metabolism; chlorophyll biosynthesis. In terms of biological role, catalyzes the 1,3-allylic rearrangement of the homoallylic substrate isopentenyl (IPP) to its highly electrophilic allylic isomer, dimethylallyl diphosphate (DMAPP). The protein is Isopentenyl-diphosphate Delta-isomerase of Cereibacter sphaeroides (strain ATCC 17029 / ATH 2.4.9) (Rhodobacter sphaeroides).